The primary structure comprises 52 residues: Insulin (52 aa).

Intrachain disulfides connect Cys7/Cys38, Cys19/Cys51, and Cys37/Cys42.

This sequence belongs to the insulin family. In terms of assembly, heterodimer of a B chain and an A chain linked by two disulfide bonds.

Its subcellular location is the secreted. Insulin decreases blood glucose concentration. It increases cell permeability to monosaccharides, amino acids and fatty acids. It accelerates glycolysis, the pentose phosphate cycle, and glycogen synthesis in liver. In Atractosteus spatula (Alligator gar), this protein is Insulin (ins).